Here is a 506-residue protein sequence, read N- to C-terminus: Aluminum-activated malate transporter 7 (506 aa).

6 consecutive transmembrane segments (helical) span residues V28–F48, A52–G72, V78–S98, P104–F124, R130–F150, and V166–G186. Residues D461–E485 are disordered. Positions D467–E485 are enriched in basic and acidic residues.

This sequence belongs to the aromatic acid exporter (TC 2.A.85) family.

The protein localises to the membrane. In terms of biological role, malate transporter. The protein is Aluminum-activated malate transporter 7 (ALMT7) of Arabidopsis thaliana (Mouse-ear cress).